A 326-amino-acid chain; its full sequence is AA9 family lytic polysaccharide monooxygenase B (326 aa).

The first 19 residues, 1–19, serve as a signal peptide directing secretion; sequence MKSFTIAALAALWAQEAAA. Cu(2+) contacts are provided by His-20 and His-98. Cys-57 and Cys-192 form a disulfide bridge. O2 is bound by residues His-178 and Gln-187. Tyr-189 contacts Cu(2+). The segment covering 265–281 has biased composition (low complexity); sequence PSATLTQPTSTATATSA. A disordered region spans residues 265-286; it reads PSATLTQPTSTATATSAPGGGG. A CBM1 domain is found at 289–326; sequence CTAAKYQQCGGTGYTGCTTCASGSTCSAVSPPYYSQCL.

Belongs to the polysaccharide monooxygenase AA9 family. Cu(2+) is required as a cofactor.

The protein resides in the secreted. It carries out the reaction [(1-&gt;4)-beta-D-glucosyl]n+m + reduced acceptor + O2 = 4-dehydro-beta-D-glucosyl-[(1-&gt;4)-beta-D-glucosyl]n-1 + [(1-&gt;4)-beta-D-glucosyl]m + acceptor + H2O.. Its function is as follows. Lytic polysaccharide monooxygenase (LPMO) that depolymerizes crystalline and amorphous polysaccharides via the oxidation of scissile alpha- or beta-(1-4)-glycosidic bonds, yielding C1 and C4 oxidation products. Catalysis by LPMOs requires the reduction of the active-site copper from Cu(II) to Cu(I) by a reducing agent and H(2)O(2) or O(2) as a cosubstrate. Shows no activity on wheat arabinoxylan, konjac glucomannan, acetylated spruce galactoglucomannan, or cellopentaose. In Thermothielavioides terrestris (strain ATCC 38088 / NRRL 8126) (Thielavia terrestris), this protein is AA9 family lytic polysaccharide monooxygenase B.